A 65-amino-acid polypeptide reads, in one-letter code: Hirudin-2B (65 aa).

The segment at 1 to 3 (ITY) is interaction with thrombin active site. Cystine bridges form between Cys-6-Cys-14, Cys-16-Cys-28, and Cys-22-Cys-39. A disordered region spans residues 39 to 65 (CVTGEGTPKPQSHNDGDFEEIPEEYLQ). The O-linked (GalNAc...) threonine glycan is linked to Thr-45. The segment at 55-65 (DFEEIPEEYLQ) is interaction with fibrinogen-binding exosite of thrombin. A compositionally biased stretch (acidic residues) spans 55–65 (DFEEIPEEYLQ). Residue Tyr-63 is modified to Sulfotyrosine.

This sequence belongs to the protease inhibitor I14 (hirudin) family.

It is found in the secreted. Its function is as follows. Hirudin is a potent thrombin-specific protease inhibitor. It forms a stable non-covalent complex with alpha-thrombin, thereby abolishing its ability to cleave fibrinogen. The protein is Hirudin-2B of Hirudo medicinalis (Medicinal leech).